Consider the following 296-residue polypeptide: Cobalamin trafficking protein CblD (296 aa).

The N-terminal 92 residues, 1-92 (MANVLCNRAR…HLNGTAAQRK (92 aa)), are a transit peptide targeting the mitochondrion.

In terms of assembly, heterodimer with MMACHC. Forms a multiprotein complex with MMACHC, MTR and MTRR.

Its subcellular location is the cytoplasm. It is found in the mitochondrion. Involved in cobalamin metabolism and trafficking. Plays a role in regulating the biosynthesis and the proportion of two coenzymes, methylcob(III)alamin (MeCbl) and 5'-deoxyadenosylcobalamin (AdoCbl). Promotes oxidation of cob(II)alamin bound to MMACHC. The processing of cobalamin in the cytosol occurs in a multiprotein complex composed of at least MMACHC, MMADHC, MTRR (methionine synthase reductase) and MTR (methionine synthase) which may contribute to shuttle safely and efficiently cobalamin towards MTR in order to produce methionine. The chain is Cobalamin trafficking protein CblD (MMADHC) from Gallus gallus (Chicken).